The sequence spans 173 residues: Shikimate kinase 1 (173 aa).

ATP is bound at residue 14 to 19 (GAGKST). Ser18 is a Mg(2+) binding site. The substrate site is built by Asp36, Arg60, and Gly82. ATP is bound at residue Arg120. Arg140 is a binding site for substrate. Gln157 provides a ligand contact to ATP.

It belongs to the shikimate kinase family. Monomer. Mg(2+) serves as cofactor.

The protein resides in the cytoplasm. It carries out the reaction shikimate + ATP = 3-phosphoshikimate + ADP + H(+). It functions in the pathway metabolic intermediate biosynthesis; chorismate biosynthesis; chorismate from D-erythrose 4-phosphate and phosphoenolpyruvate: step 5/7. Its function is as follows. Catalyzes the specific phosphorylation of the 3-hydroxyl group of shikimic acid using ATP as a cosubstrate. This chain is Shikimate kinase 1, found in Shigella boydii serotype 18 (strain CDC 3083-94 / BS512).